We begin with the raw amino-acid sequence, 116 residues long: Glycine-rich protein 3 short isoform (116 aa).

The signal sequence occupies residues 1-24 (MASKTLLLLGLFAFLFIVSEMAAA). Residues 27-83 (VKSESEETVKPEQHGGGFGDNGGGRYQGGGGHGGHGGGGYQGGGGRYQGGGGRQGGG) are disordered. Positions 29–39 (SESEETVKPEQ) are enriched in basic and acidic residues. Over residues 40 to 83 (HGGGFGDNGGGRYQGGGGHGGHGGGGYQGGGGRYQGGGGRQGGG) the composition is skewed to gly residues. A run of 5 repeats spans residues 54 to 59 (GGGGHG), 62 to 67 (GGGGYQ), 68 to 73 (GGGGRY), 75 to 80 (GGGGRQ), and 81 to 86 (GGGGSY). The segment at 54–86 (GGGGHGGHGGGGYQGGGGRYQGGGGRQGGGGSY) is 5 X 6 AA tandem repeats of G-G-G-G-[HYRS]-[GYQ].

It belongs to the GRP family. Interacts with WAK1 (via the extracellular domain). Component of a 500 kDa complex, composed of GRP3 or GRP3-S, WAK1 and KAPP.

It localises to the secreted. It is found in the extracellular space. The protein localises to the extracellular matrix. In terms of biological role, regulates the function of the receptor protein kinase WAK1. This chain is Glycine-rich protein 3 short isoform (GRP3S), found in Arabidopsis thaliana (Mouse-ear cress).